The following is a 446-amino-acid chain: sn-2 acyl-lipid omega-3 desaturase (ferredoxin), chloroplastic (446 aa).

Residues Met1–Asn65 constitute a chloroplast transit peptide. 2 helical membrane-spanning segments follow: residues Leu118–Leu138 and Trp141–Leu161. The Histidine box-1 motif lies at His163 to His167. The Histidine box-2 signature appears at His199–His203. 3 helical membrane-spanning segments follow: residues Arg231–Ala250, Thr279–Ile299, and Leu302–Leu322. The Histidine box-3 signature appears at His366 to His370.

It belongs to the fatty acid desaturase type 1 family. Most abundant in leaves and seedlings.

The protein localises to the plastid. It localises to the chloroplast inner membrane. It carries out the reaction a (7Z,10Z)-hexadecadienoyl-containing glycerolipid + 2 reduced [2Fe-2S]-[ferredoxin] + O2 + 2 H(+) = a (7Z,10Z,13Z)-hexadecatrienoyl-containing glycerolipid + 2 oxidized [2Fe-2S]-[ferredoxin] + 2 H2O. The enzyme catalyses a (9Z,12Z)-octadecadienoyl-containing glycerolipid + 2 reduced [2Fe-2S]-[ferredoxin] + O2 + 2 H(+) = (9Z,12Z,15Z)-octadecatrienoyl-containing glycerolipid + 2 oxidized [2Fe-2S]-[ferredoxin] + 2 H2O. The protein operates within lipid metabolism; polyunsaturated fatty acid biosynthesis. In terms of biological role, chloroplast omega-3 fatty acid desaturase introduces the third double bond in the biosynthesis of 16:3 and 18:3 fatty acids, important constituents of plant membranes. It is thought to use ferredoxin as an electron donor and to act on fatty acids esterified to galactolipids, sulfolipids and phosphatidylglycerol. The sequence is that of sn-2 acyl-lipid omega-3 desaturase (ferredoxin), chloroplastic from Arabidopsis thaliana (Mouse-ear cress).